The following is a 360-amino-acid chain: 3-isopropylmalate dehydrogenase (360 aa).

Residue 76-89 (GPKWDTIERDIRPE) coordinates NAD(+). Substrate-binding residues include R96, R106, R134, and D224. Mg(2+) is bound by residues D224, D248, and D252. 282-294 (GSAPDIAGQGIAN) provides a ligand contact to NAD(+).

This sequence belongs to the isocitrate and isopropylmalate dehydrogenases family. LeuB type 1 subfamily. Homodimer. Requires Mg(2+) as cofactor. Mn(2+) serves as cofactor.

The protein resides in the cytoplasm. It catalyses the reaction (2R,3S)-3-isopropylmalate + NAD(+) = 4-methyl-2-oxopentanoate + CO2 + NADH. It participates in amino-acid biosynthesis; L-leucine biosynthesis; L-leucine from 3-methyl-2-oxobutanoate: step 3/4. In terms of biological role, catalyzes the oxidation of 3-carboxy-2-hydroxy-4-methylpentanoate (3-isopropylmalate) to 3-carboxy-4-methyl-2-oxopentanoate. The product decarboxylates to 4-methyl-2 oxopentanoate. In Pseudomonas syringae pv. tomato (strain ATCC BAA-871 / DC3000), this protein is 3-isopropylmalate dehydrogenase.